Here is a 224-residue protein sequence, read N- to C-terminus: Uracil-DNA glycosylase (224 aa).

Aspartate 61 acts as the Proton acceptor in catalysis.

This sequence belongs to the uracil-DNA glycosylase (UDG) superfamily. UNG family.

Its subcellular location is the cytoplasm. The catalysed reaction is Hydrolyzes single-stranded DNA or mismatched double-stranded DNA and polynucleotides, releasing free uracil.. In terms of biological role, excises uracil residues from the DNA which can arise as a result of misincorporation of dUMP residues by DNA polymerase or due to deamination of cytosine. In Mannheimia succiniciproducens (strain KCTC 0769BP / MBEL55E), this protein is Uracil-DNA glycosylase.